We begin with the raw amino-acid sequence, 155 residues long: Probable Brix domain-containing ribosomal biogenesis protein (155 aa).

The 155-residue stretch at 1-155 (MLLTTSRKPS…LLIRDFRVGE (155 aa)) folds into the Brix domain.

Probably involved in the biogenesis of the ribosome. The protein is Probable Brix domain-containing ribosomal biogenesis protein of Methanothermobacter thermautotrophicus (strain ATCC 29096 / DSM 1053 / JCM 10044 / NBRC 100330 / Delta H) (Methanobacterium thermoautotrophicum).